The primary structure comprises 420 residues: 3-phosphoshikimate 1-carboxyvinyltransferase (420 aa).

Lysine 20, serine 21, and arginine 25 together coordinate 3-phosphoshikimate. Lysine 20 serves as a coordination point for phosphoenolpyruvate. Phosphoenolpyruvate-binding residues include glycine 90 and arginine 118. 3-phosphoshikimate contacts are provided by serine 159, serine 160, glutamine 161, serine 187, aspartate 303, and lysine 330. Glutamine 161 is a binding site for phosphoenolpyruvate. Aspartate 303 serves as the catalytic Proton acceptor. Phosphoenolpyruvate is bound by residues arginine 334, arginine 376, and lysine 402.

This sequence belongs to the EPSP synthase family. As to quaternary structure, monomer.

Its subcellular location is the cytoplasm. The enzyme catalyses 3-phosphoshikimate + phosphoenolpyruvate = 5-O-(1-carboxyvinyl)-3-phosphoshikimate + phosphate. It functions in the pathway metabolic intermediate biosynthesis; chorismate biosynthesis; chorismate from D-erythrose 4-phosphate and phosphoenolpyruvate: step 6/7. Its function is as follows. Catalyzes the transfer of the enolpyruvyl moiety of phosphoenolpyruvate (PEP) to the 5-hydroxyl of shikimate-3-phosphate (S3P) to produce enolpyruvyl shikimate-3-phosphate and inorganic phosphate. The protein is 3-phosphoshikimate 1-carboxyvinyltransferase of Brachyspira hyodysenteriae (strain ATCC 49526 / WA1).